Consider the following 352-residue polypeptide: Ni-sirohydrochlorin a,c-diamide reductive cyclase complex, component CfbD (352 aa).

The protein belongs to the NifD/NifK/NifE/NifN family. Homodimer or monomer. The Ni-sirohydrochlorin a,c-diamide reductive cyclase complex is composed of a NifH homolog component CfbC and a NifD homolog component CfbD. It depends on [4Fe-4S] cluster as a cofactor.

The enzyme catalyses Ni-sirohydrochlorin a,c-diamide + 3 AH2 + ATP + H2O = 15,17(3)-seco-F430-17(3)-acid + 3 A + ADP + phosphate. In terms of biological role, involved in the biosynthesis of the unique nickel-containing tetrapyrrole coenzyme F430, the prosthetic group of methyl-coenzyme M reductase (MCR), which plays a key role in methanogenesis and anaerobic methane oxidation. Catalyzes both the six-electron reduction of the tetrahydroporphyrin ring system and the gamma-lactamization of the c-acetamide side chain of Ni-sirohydrochlorin a,c-diamide to yield 15,17(3)-seco-F430-17(3)-acid (seco-F430), the last intermediate in the biosynthesis of the coenzyme F430. The polypeptide is Ni-sirohydrochlorin a,c-diamide reductive cyclase complex, component CfbD (Methanocaldococcus jannaschii (strain ATCC 43067 / DSM 2661 / JAL-1 / JCM 10045 / NBRC 100440) (Methanococcus jannaschii)).